Here is a 754-residue protein sequence, read N- to C-terminus: MKNSIISYPRIGANRELKFAIEKYFKNQSSKEELLKSAKDLRIRHWQEIQKAGIDFIPSNDFSLYDNVLDAAVLFNIVHTKYKNLNLDALDEYFAQSRGYQGENGDVTALAMKKWFNTNYHYLVPECDNADIIALTGDKIFKEYLEAKELGIESKPVLIGIFTLFKLIAFKDEKTQKLAKEKLLNAYIELFDKLNELKVTWLELDEPYLVYDLSKEDIALFEEFYQELLNHKKDLKILLQSYFGDLRDIYPKLLESKFDALGLDFIEGKQSLALIQKYGFAKDKILFAGLINGKNIYANDYAKSLKLIKELQKYTQNIVLNTSCSLLHVPYSTEFESKLDSSYLKLFAFAKEKLQELKDLKEILNSSEENPLFRANQELFKNIPERLDEKVKARLKALKKEDFTRTPSFKERALIQKEFLKLPLLPTTTIGSFPQSTDVRSNRLAFKQEKISAQNYTEFNQQKIKECIQIQEEIGLDVLVHGEFERNDMVEYFGENLKGFLFTQNGWVQSYGTRCVKPPVIWGDVSRTKPITLAWSKFAQSLSQKIVKGMLTGPVTILNWSFPREDISLKESTEQIALAIRDEVLDLENAGIKIIQIDEAALREKLPLRKSDWHSEYLDWAIPAFNLVHSGVKAKTQIHTHMCYSEFGDILKEIDAMDADVISFEASRSNLSLLDTLKAIRFKTEVGPGVYDIHSPRVPSVEELSLTIEKILNKLPKEQIWINPDCGLKTRAYEEVIASLKNLVTATQKIREQL.

Residues 15–18 (RELK) and K114 each bind 5-methyltetrahydropteroyltri-L-glutamate. L-homocysteine-binding positions include 430–432 (IGS) and E483. Residues 430 to 432 (IGS) and E483 each bind L-methionine. 5-methyltetrahydropteroyltri-L-glutamate contacts are provided by residues 514-515 (RC) and W560. D598 is a binding site for L-homocysteine. D598 is an L-methionine binding site. E604 provides a ligand contact to 5-methyltetrahydropteroyltri-L-glutamate. Residues H641, C643, and E665 each contribute to the Zn(2+) site. H694 functions as the Proton donor in the catalytic mechanism. C726 serves as a coordination point for Zn(2+).

It belongs to the vitamin-B12 independent methionine synthase family. Zn(2+) is required as a cofactor.

It catalyses the reaction 5-methyltetrahydropteroyltri-L-glutamate + L-homocysteine = tetrahydropteroyltri-L-glutamate + L-methionine. It functions in the pathway amino-acid biosynthesis; L-methionine biosynthesis via de novo pathway; L-methionine from L-homocysteine (MetE route): step 1/1. Functionally, catalyzes the transfer of a methyl group from 5-methyltetrahydrofolate to homocysteine resulting in methionine formation. The polypeptide is 5-methyltetrahydropteroyltriglutamate--homocysteine methyltransferase (Campylobacter jejuni subsp. jejuni serotype O:23/36 (strain 81-176)).